Here is a 134-residue protein sequence, read N- to C-terminus: Psoriasis susceptibility 1 candidate gene 2 protein homolog (134 aa).

The first 21 residues, 1–21, serve as a signal peptide directing secretion; sequence MLTWKLLGLLVLCLCAGGISG. The segment at 18–134 is disordered; the sequence is GISGNGDPSP…DLDPPQEEYR (117 aa). Pro residues-rich tracts occupy residues 39-67 and 81-98; these read PPLP…PPGS and PPKP…PDDP. The segment covering 122–134 has biased composition (acidic residues); that stretch reads EEPDLDPPQEEYR.

Its subcellular location is the secreted. The sequence is that of Psoriasis susceptibility 1 candidate gene 2 protein homolog (Psors1c2) from Mus musculus (Mouse).